Consider the following 104-residue polypeptide: MTDSIAATINTRANVYFDGKCVSHGITLADGTKKSVGVILPATLTFNTGAPEVMETVAGSCSIKLAGSDSWQSYGPGERFDVPGQSSFEIKVEGEPYHYICHFG.

This sequence belongs to the nucleoside phosphorylase PpnP family.

The catalysed reaction is a purine D-ribonucleoside + phosphate = a purine nucleobase + alpha-D-ribose 1-phosphate. It catalyses the reaction adenosine + phosphate = alpha-D-ribose 1-phosphate + adenine. It carries out the reaction cytidine + phosphate = cytosine + alpha-D-ribose 1-phosphate. The enzyme catalyses guanosine + phosphate = alpha-D-ribose 1-phosphate + guanine. The catalysed reaction is inosine + phosphate = alpha-D-ribose 1-phosphate + hypoxanthine. It catalyses the reaction thymidine + phosphate = 2-deoxy-alpha-D-ribose 1-phosphate + thymine. It carries out the reaction uridine + phosphate = alpha-D-ribose 1-phosphate + uracil. The enzyme catalyses xanthosine + phosphate = alpha-D-ribose 1-phosphate + xanthine. In terms of biological role, catalyzes the phosphorolysis of diverse nucleosides, yielding D-ribose 1-phosphate and the respective free bases. Can use uridine, adenosine, guanosine, cytidine, thymidine, inosine and xanthosine as substrates. Also catalyzes the reverse reactions. This is Pyrimidine/purine nucleoside phosphorylase from Leptothrix cholodnii (strain ATCC 51168 / LMG 8142 / SP-6) (Leptothrix discophora (strain SP-6)).